The sequence spans 74 residues: MAEEESVPKMVAPEDDIREIHSRLDEIERRLDFVWGEVYQRFGKRIGRDIGILYGLVIGLYLCMLYILLGVAFR.

Residues 50 to 70 (IGILYGLVIGLYLCMLYILLG) form a helical membrane-spanning segment.

The protein belongs to the MtrG family. In terms of assembly, the complex is composed of 8 subunits; MtrA, MtrB, MtrC, MtrD, MtrE, MtrF, MtrG and MtrH.

It is found in the cell membrane. It catalyses the reaction 5-methyl-5,6,7,8-tetrahydromethanopterin + coenzyme M + 2 Na(+)(in) = 5,6,7,8-tetrahydromethanopterin + methyl-coenzyme M + 2 Na(+)(out). The protein operates within one-carbon metabolism; methanogenesis from CO(2); methyl-coenzyme M from 5,10-methylene-5,6,7,8-tetrahydromethanopterin: step 2/2. Functionally, part of a complex that catalyzes the formation of methyl-coenzyme M and tetrahydromethanopterin from coenzyme M and methyl-tetrahydromethanopterin. This is an energy-conserving, sodium-ion translocating step. The protein is Tetrahydromethanopterin S-methyltransferase subunit G of Methanopyrus kandleri (strain AV19 / DSM 6324 / JCM 9639 / NBRC 100938).